The sequence spans 525 residues: M-phase inducer phosphatase 1 (525 aa).

A disordered region spans residues 1 to 42 (MELGPEPPHRRRLLFTCSPTPAPQPTGKVQFGASRAGGLSPV). The Phosphodegron motif lies at 74 to 84 (MGSSESTDSGF). Ser76 bears the Phosphoserine; by CHEK1 mark. Ser79, Ser82, and Ser88 each carry phosphoserine; by NEK11. The residue at position 124 (Ser124) is a Phosphoserine; by CHEK1 and CHEK2. Residues 141–143 (KEN) carry the KEN box motif. Phosphoserine; by CHEK1 is present on Ser178. A disordered region spans residues 260 to 318 (FDSPSPCSSTSSCSTRAVKRADRSHEESPRGTKRRKSSEASPVKADVPEPTQLPHQSLS). A compositionally biased stretch (low complexity) spans 262-274 (SPSPCSSTSSCST). A compositionally biased stretch (basic and acidic residues) spans 278–289 (KRADRSHEESPR). 2 positions are modified to phosphoserine; by CHEK1 and CHEK2: Ser283 and Ser296. The 107-residue stretch at 377 to 483 (LIKEFVIIDC…FFLKCQSHCE (107 aa)) folds into the Rhodanese domain. Cys432 is an active-site residue. Thr508 is subject to Phosphothreonine; by CHEK1. Phosphoserine; by PLK3 occurs at positions 514 and 520.

This sequence belongs to the MPI phosphatase family. Interacts with CCNB1/cyclin B1. Interacts with YWHAE/14-3-3 epsilon when phosphorylated. Interacts with CUL1 specifically when CUL1 is neddylated and active. Interacts with BTRC/BTRCP1 and FBXW11/BTRCP2. Interactions with CUL1, BTRC and FBXW11 are enhanced upon DNA damage. Interacts with CHEK2; mediates CDC25A phosphorylation and degradation in response to infrared-induced DNA damages. Interacts with HSP90AB1; prevents heat shock-mediated CDC25A degradation and contributes to cell cycle progression. In terms of processing, phosphorylated by CHEK1 on Ser-76, Ser-124, Ser-178, Ser-283, Ser-296 and Thr-508 during checkpoint mediated cell cycle arrest. Also phosphorylated by CHEK2 on Ser-124, Ser-283, and Ser-296 during checkpoint mediated cell cycle arrest. Phosphorylation on Ser-178 and Thr-508 creates binding sites for YWHAE/14-3-3 epsilon which inhibits CDC25A. Phosphorylation on Ser-76, Ser-124, Ser-178, Ser-283 and Ser-296 may also promote ubiquitin-dependent proteolysis of CDC25A by the SCF complex. Phosphorylation of CDC25A at Ser-76 by CHEK1 primes it for subsequent phosphorylation at Ser-79, Ser-82 and Ser-88 by NEK11. Phosphorylation by NEK11 is required for BTRC-mediated polyubiquitination and degradation. Phosphorylation by PIM1 leads to an increase in phosphatase activity. Phosphorylated by PLK3 following DNA damage, leading to promote its ubiquitination and degradation. Ubiquitinated by the anaphase promoting complex/cyclosome (APC/C) ubiquitin ligase complex that contains FZR1/CDH1 during G1 phase leading to its degradation by the proteasome. Ubiquitinated by a SCF complex containing BTRC and FBXW11 during S phase leading to its degradation by the proteasome. Deubiquitination by USP17L2/DUB3 leads to its stabilization.

The catalysed reaction is O-phospho-L-tyrosyl-[protein] + H2O = L-tyrosyl-[protein] + phosphate. Stimulated by B-type cyclins. Stimulated by PIM1-mediated phosphorylation. Tyrosine protein phosphatase which functions as a dosage-dependent inducer of mitotic progression. Directly dephosphorylates CDK1 and stimulates its kinase activity. Also dephosphorylates CDK2 in complex with cyclin-E, in vitro. The protein is M-phase inducer phosphatase 1 (Cdc25a) of Rattus norvegicus (Rat).